A 219-amino-acid chain; its full sequence is Cytidylate kinase (219 aa).

Position 10–18 (10–18) interacts with ATP; the sequence is GPAAAGKST.

Belongs to the cytidylate kinase family. Type 1 subfamily.

The protein localises to the cytoplasm. The catalysed reaction is CMP + ATP = CDP + ADP. The enzyme catalyses dCMP + ATP = dCDP + ADP. This Staphylococcus aureus (strain MRSA252) protein is Cytidylate kinase.